The sequence spans 141 residues: Translation initiation factor 2 subunit beta (141 aa).

Belongs to the eIF-2-beta/eIF-5 family. In terms of assembly, heterotrimer composed of an alpha, a beta and a gamma chain.

Its function is as follows. eIF-2 functions in the early steps of protein synthesis by forming a ternary complex with GTP and initiator tRNA. The polypeptide is Translation initiation factor 2 subunit beta (Sulfolobus acidocaldarius (strain ATCC 33909 / DSM 639 / JCM 8929 / NBRC 15157 / NCIMB 11770)).